Reading from the N-terminus, the 957-residue chain is Glycine dehydrogenase (decarboxylating) (957 aa).

Lys-708 carries the N6-(pyridoxal phosphate)lysine modification.

It belongs to the GcvP family. As to quaternary structure, the glycine cleavage system is composed of four proteins: P, T, L and H. The cofactor is pyridoxal 5'-phosphate.

It catalyses the reaction N(6)-[(R)-lipoyl]-L-lysyl-[glycine-cleavage complex H protein] + glycine + H(+) = N(6)-[(R)-S(8)-aminomethyldihydrolipoyl]-L-lysyl-[glycine-cleavage complex H protein] + CO2. In terms of biological role, the glycine cleavage system catalyzes the degradation of glycine. The P protein binds the alpha-amino group of glycine through its pyridoxal phosphate cofactor; CO(2) is released and the remaining methylamine moiety is then transferred to the lipoamide cofactor of the H protein. This Salmonella paratyphi B (strain ATCC BAA-1250 / SPB7) protein is Glycine dehydrogenase (decarboxylating).